The sequence spans 851 residues: DNA mismatch repair protein MutS (851 aa).

An ATP-binding site is contributed by 602–609; it reads GPNMSGKS.

The protein belongs to the DNA mismatch repair MutS family.

Its function is as follows. This protein is involved in the repair of mismatches in DNA. It is possible that it carries out the mismatch recognition step. This protein has a weak ATPase activity. This is DNA mismatch repair protein MutS from Streptococcus pyogenes serotype M18 (strain MGAS8232).